Reading from the N-terminus, the 129-residue chain is Glycine cleavage system H protein (129 aa).

Positions 24 to 106 (LLKIGVSEFA…IGEGWLVILK (83 aa)) constitute a Lipoyl-binding domain. Lys65 is modified (N6-lipoyllysine).

The protein belongs to the GcvH family. The glycine cleavage system is composed of four proteins: P, T, L and H. Requires (R)-lipoate as cofactor.

Functionally, the glycine cleavage system catalyzes the degradation of glycine. The H protein shuttles the methylamine group of glycine from the P protein to the T protein. This chain is Glycine cleavage system H protein, found in Prochlorococcus marinus (strain AS9601).